The sequence spans 113 residues: Ig heavy chain V region 36-60 (113 aa).

In Mus musculus (Mouse), this protein is Ig heavy chain V region 36-60.